We begin with the raw amino-acid sequence, 201 residues long: Recombination protein RecR (201 aa).

The C4-type zinc finger occupies 57–72 (CADCRTFTEQEVCNIC). In terms of domain architecture, Toprim spans 81 to 176 (GQICVVESPA…EASRIAHGVP (96 aa)).

The protein belongs to the RecR family.

Its function is as follows. May play a role in DNA repair. It seems to be involved in an RecBC-independent recombinational process of DNA repair. It may act with RecF and RecO. The protein is Recombination protein RecR of Salmonella arizonae (strain ATCC BAA-731 / CDC346-86 / RSK2980).